The chain runs to 351 residues: Phenylalanine--tRNA ligase alpha subunit (351 aa).

Positions Leu-45–Ala-69 are disordered. Glu-269 is a binding site for Mg(2+).

It belongs to the class-II aminoacyl-tRNA synthetase family. Phe-tRNA synthetase alpha subunit type 1 subfamily. In terms of assembly, tetramer of two alpha and two beta subunits. Requires Mg(2+) as cofactor.

The protein localises to the cytoplasm. It carries out the reaction tRNA(Phe) + L-phenylalanine + ATP = L-phenylalanyl-tRNA(Phe) + AMP + diphosphate + H(+). In Corynebacterium jeikeium (strain K411), this protein is Phenylalanine--tRNA ligase alpha subunit.